We begin with the raw amino-acid sequence, 200 residues long: Imidazole glycerol phosphate synthase subunit HisH (200 aa).

A Glutamine amidotransferase type-1 domain is found at Asp-3–Pro-200. The active-site Nucleophile is Cys-78. Catalysis depends on residues His-179 and Glu-181.

Heterodimer of HisH and HisF.

It localises to the cytoplasm. It carries out the reaction 5-[(5-phospho-1-deoxy-D-ribulos-1-ylimino)methylamino]-1-(5-phospho-beta-D-ribosyl)imidazole-4-carboxamide + L-glutamine = D-erythro-1-(imidazol-4-yl)glycerol 3-phosphate + 5-amino-1-(5-phospho-beta-D-ribosyl)imidazole-4-carboxamide + L-glutamate + H(+). The enzyme catalyses L-glutamine + H2O = L-glutamate + NH4(+). The protein operates within amino-acid biosynthesis; L-histidine biosynthesis; L-histidine from 5-phospho-alpha-D-ribose 1-diphosphate: step 5/9. IGPS catalyzes the conversion of PRFAR and glutamine to IGP, AICAR and glutamate. The HisH subunit catalyzes the hydrolysis of glutamine to glutamate and ammonia as part of the synthesis of IGP and AICAR. The resulting ammonia molecule is channeled to the active site of HisF. In Xanthomonas axonopodis pv. citri (strain 306), this protein is Imidazole glycerol phosphate synthase subunit HisH.